Reading from the N-terminus, the 517-residue chain is Bifunctional purine biosynthesis protein PurH (517 aa).

The MGS-like domain maps to Met1 to Val145.

Belongs to the PurH family.

The catalysed reaction is (6R)-10-formyltetrahydrofolate + 5-amino-1-(5-phospho-beta-D-ribosyl)imidazole-4-carboxamide = 5-formamido-1-(5-phospho-D-ribosyl)imidazole-4-carboxamide + (6S)-5,6,7,8-tetrahydrofolate. The enzyme catalyses IMP + H2O = 5-formamido-1-(5-phospho-D-ribosyl)imidazole-4-carboxamide. Its pathway is purine metabolism; IMP biosynthesis via de novo pathway; 5-formamido-1-(5-phospho-D-ribosyl)imidazole-4-carboxamide from 5-amino-1-(5-phospho-D-ribosyl)imidazole-4-carboxamide (10-formyl THF route): step 1/1. It participates in purine metabolism; IMP biosynthesis via de novo pathway; IMP from 5-formamido-1-(5-phospho-D-ribosyl)imidazole-4-carboxamide: step 1/1. This is Bifunctional purine biosynthesis protein PurH from Prochlorococcus marinus (strain MIT 9515).